We begin with the raw amino-acid sequence, 114 residues long: Large ribosomal subunit protein uL18 (114 aa).

This sequence belongs to the universal ribosomal protein uL18 family. In terms of assembly, part of the 50S ribosomal subunit; part of the 5S rRNA/L5/L18/L25 subcomplex. Contacts the 5S and 23S rRNAs.

This is one of the proteins that bind and probably mediate the attachment of the 5S RNA into the large ribosomal subunit, where it forms part of the central protuberance. This Parabacteroides distasonis (strain ATCC 8503 / DSM 20701 / CIP 104284 / JCM 5825 / NCTC 11152) protein is Large ribosomal subunit protein uL18.